The sequence spans 565 residues: Proline--tRNA ligase (565 aa).

This sequence belongs to the class-II aminoacyl-tRNA synthetase family. ProS type 1 subfamily. As to quaternary structure, homodimer.

Its subcellular location is the cytoplasm. The catalysed reaction is tRNA(Pro) + L-proline + ATP = L-prolyl-tRNA(Pro) + AMP + diphosphate. Its function is as follows. Catalyzes the attachment of proline to tRNA(Pro) in a two-step reaction: proline is first activated by ATP to form Pro-AMP and then transferred to the acceptor end of tRNA(Pro). As ProRS can inadvertently accommodate and process non-cognate amino acids such as alanine and cysteine, to avoid such errors it has two additional distinct editing activities against alanine. One activity is designated as 'pretransfer' editing and involves the tRNA(Pro)-independent hydrolysis of activated Ala-AMP. The other activity is designated 'posttransfer' editing and involves deacylation of mischarged Ala-tRNA(Pro). The misacylated Cys-tRNA(Pro) is not edited by ProRS. In Francisella tularensis subsp. mediasiatica (strain FSC147), this protein is Proline--tRNA ligase.